The chain runs to 765 residues: Palmitoyltransferase ZDHHC8 (765 aa).

Residues 1-13 (MPRSPGTRLKPAK) lie on the Cytoplasmic side of the membrane. A helical membrane pass occupies residues 14 to 34 (YIPVATAAALLVGSSTLFFVF). At 35–52 (TCPWLTRAVSPAVPVYNG) the chain is on the lumenal side. The helical transmembrane segment at 53 to 73 (IIFLFVLANFSMATFMDPGVF) threads the bilayer. Over 74 to 148 (PRADEDEDKE…NCIGRRNYRY (75 aa)) the chain is Cytoplasmic. In terms of domain architecture, DHHC spans 104–154 (KWCATCHFYRPPRCSHCSVCDNCVEDFDHHCPWVNNCIGRRNYRYFFLFLL). The active-site S-palmitoyl cysteine intermediate is Cys-134. The helical transmembrane segment at 149-169 (FFLFLLSLSAHMVGVVAFGLV) threads the bilayer. At 170 to 190 (YVLNHAEGLGAAHTTITMAVM) the chain is on the lumenal side. The helical transmembrane segment at 191 to 211 (CVAGLFFIPVIGLTGFHVVLV) threads the bilayer. Residues 212–765 (TRGRTTNEQV…VGGTTYEISV (554 aa)) lie on the Cytoplasmic side of the membrane. Positions 293–352 (GLGRSKSKGSLDRLDEKPLDLGPPLPPKIEAGTFSSDLQTPRPGSAESALSVQRTSPPTP) are disordered. Positions 301-311 (GSLDRLDEKPL) are enriched in basic and acidic residues. Ser-337 carries the phosphoserine modification. Omega-N-methylarginine is present on Arg-441. The interval 509–540 (LHPGATGDPPRPLPRSFSPVLGPRPREPSPVR) is disordered. Phosphoserine is present on residues Ser-606, Ser-627, Ser-675, Ser-725, and Ser-743. The tract at residues 613-746 (GPGFGGARNP…PPGPSASPTR (134 aa)) is disordered. The span at 622–653 (PALQTSLSSLSSSVSRAPRTSSSSLQADQASS) shows a compositional bias: low complexity.

It belongs to the DHHC palmitoyltransferase family. ERF2/ZDHHC9 subfamily.

It localises to the golgi apparatus membrane. It is found in the mitochondrion membrane. It carries out the reaction L-cysteinyl-[protein] + hexadecanoyl-CoA = S-hexadecanoyl-L-cysteinyl-[protein] + CoA. Its function is as follows. Palmitoyltransferase that catalyzes the addition of palmitate onto various protein substrates and therefore functions in several unrelated biological processes. Through the palmitoylation of ABCA1 regulates the localization of the transporter to the plasma membrane and thereby regulates its function in cholesterol and phospholipid efflux. Could also pamitoylate the D(2) dopamine receptor DRD2 and regulate its stability and localization to the plasma membrane. Could also play a role in glutamatergic transmission. The polypeptide is Palmitoyltransferase ZDHHC8 (Pan troglodytes (Chimpanzee)).